The chain runs to 482 residues: Retinoic acid receptor beta (482 aa).

The tract at residues 1–114 (MSTSSHACPV…PLPPPRVYKP (114 aa)) is modulating. Ser-104 carries the phosphoserine modification. 2 NR C4-type zinc fingers span residues 115-135 (CFVC…CEGC) and 151-175 (CHRD…LQKC). Residues 115-180 (CFVCQDKSSG…RLQKCFEVGM (66 aa)) constitute a DNA-binding region (nuclear receptor). A hinge region spans residues 181 to 209 (SKESVRNDRNKKKKEPSKQECTESYEMTA). The 235-residue stretch at 210–444 (ELDDLTEKIR…PLIQEMLENS (235 aa)) folds into the NR LBD domain. Positions 443 to 482 (NSEGHEPLTPSSSGNIAEHSPSVSPSSVENSGVSQSPLLQ) are disordered. The segment covering 462–482 (SPSVSPSSVENSGVSQSPLLQ) has biased composition (low complexity).

The protein belongs to the nuclear hormone receptor family. NR1 subfamily. In terms of assembly, homodimer. Heterodimer; with a RXR molecule. Binds DNA preferentially as a RAR/RXR heterodimer. Heterodimerizes (via NR LBD) with RXRA. Interacts weakly with NCOR2.

The protein resides in the nucleus. It localises to the cytoplasm. Functionally, receptor for retinoic acid. Retinoic acid receptors bind as heterodimers to their target response elements in response to their ligands, all-trans or 9-cis retinoic acid, and regulate gene expression in various biological processes. The RAR/RXR heterodimers bind to the retinoic acid response elements (RARE) composed of tandem 5'-AGGTCA-3' sites known as DR1-DR5. In the absence of ligand, acts mainly as an activator of gene expression due to weak binding to corepressors. The RXRA/RARB heterodimer can act as a repressor on the DR1 element and as an activator on the DR5 element. In concert with RARG, required for skeletal growth, matrix homeostasis and growth plate function. In Mus musculus (Mouse), this protein is Retinoic acid receptor beta (Rarb).